An 87-amino-acid polypeptide reads, in one-letter code: Cuticle protein 1 (87 aa).

Q1 bears the Pyrrolidone carboxylic acid mark. Tandem repeats lie at residues 5-20, 43-58, and 71-86. Cystine bridges form between C14/C20, C52/C58, and C80/C86.

This is Cuticle protein 1 from Blaberus craniifer (Death's head cockroach).